Consider the following 64-residue polypeptide: Sperm protamine P1 (64 aa).

A disordered region spans residues 1–64 (MVRYRRHSRS…QSRRRRRRRY (64 aa)).

This sequence belongs to the protamine P1 family. As to expression, testis.

It localises to the nucleus. It is found in the chromosome. Protamines substitute for histones in the chromatin of sperm during the haploid phase of spermatogenesis. They compact sperm DNA into a highly condensed, stable and inactive complex. The sequence is that of Sperm protamine P1 (PRM1) from Dromiciops gliroides (Monito del Monte).